We begin with the raw amino-acid sequence, 212 residues long: Glycerol-3-phosphate acyltransferase (212 aa).

The next 5 membrane-spanning stretches (helical) occupy residues 3–23 (ILLA…VIVS), 51–71 (KAAI…VWLA), 78–98 (DVAI…PVFF), 115–135 (AVHP…AFFF), and 139–159 (SLAA…LFGT).

Belongs to the PlsY family. Probably interacts with PlsX.

It is found in the cell inner membrane. It carries out the reaction an acyl phosphate + sn-glycerol 3-phosphate = a 1-acyl-sn-glycero-3-phosphate + phosphate. The protein operates within lipid metabolism; phospholipid metabolism. Functionally, catalyzes the transfer of an acyl group from acyl-phosphate (acyl-PO(4)) to glycerol-3-phosphate (G3P) to form lysophosphatidic acid (LPA). This enzyme utilizes acyl-phosphate as fatty acyl donor, but not acyl-CoA or acyl-ACP. This is Glycerol-3-phosphate acyltransferase from Burkholderia multivorans (strain ATCC 17616 / 249).